A 351-amino-acid chain; its full sequence is UDP-3-O-acylglucosamine N-acyltransferase (351 aa).

The active-site Proton acceptor is H240.

The protein belongs to the transferase hexapeptide repeat family. LpxD subfamily. As to quaternary structure, homotrimer.

The catalysed reaction is a UDP-3-O-[(3R)-3-hydroxyacyl]-alpha-D-glucosamine + a (3R)-hydroxyacyl-[ACP] = a UDP-2-N,3-O-bis[(3R)-3-hydroxyacyl]-alpha-D-glucosamine + holo-[ACP] + H(+). It functions in the pathway bacterial outer membrane biogenesis; LPS lipid A biosynthesis. In terms of biological role, catalyzes the N-acylation of UDP-3-O-acylglucosamine using 3-hydroxyacyl-ACP as the acyl donor. Is involved in the biosynthesis of lipid A, a phosphorylated glycolipid that anchors the lipopolysaccharide to the outer membrane of the cell. The chain is UDP-3-O-acylglucosamine N-acyltransferase from Pseudomonas entomophila (strain L48).